We begin with the raw amino-acid sequence, 432 residues long: Metacaspase-1 (432 aa).

Composition is skewed to low complexity over residues 1–14 (MYPG…NNAG) and 29–59 (QQYG…SQQY). Residues 1 to 70 (MYPGSGRYTY…PPPGPPPMAY (70 aa)) are disordered. Positions 60–70 (APPPGPPPMAY) are enriched in pro residues. Residues His220 and Cys276 contribute to the active site.

The protein belongs to the peptidase C14B family.

The protein localises to the cytoplasm. It is found in the nucleus. Its function is as follows. Mediates cell death (apoptosis) triggered by oxygen stress, salt stress or chronological aging. Regulated cell death can prevent a release of toxic cellular components, thus avoiding necrotic collapse of the colony, and can also provide nutrients for healthy cells. Therefore, regulated cell death in yeast colonies can be as important for their development as are apoptosis and related processes that occur within metazoa. The sequence is that of Metacaspase-1 (MCA1) from Saccharomyces cerevisiae (strain YJM789) (Baker's yeast).